The chain runs to 336 residues: MSDLTPPSQILLRHTREFAERSVIFSGDLQDLLPAQFNAKQIRVHTQEYHHWRLLSPVLKNDIQFGVLPSEDLVSKTDTVIFYWPKNKAQAQFQLEHLCSLFPSQTNIFIVGENRSGIGSAKDLLAENVGLHKMDAARRCSLYYGCLKQKPVFNMESQWRRYQVKDVQIKTLPGVFSANQLDEGSQLLLSSFDIPLSGKVLDLACGAGVLGTILARQSPQIELTLSDVNAAALESSRANLAVNHIKARVVPSDLYSDIPERFNLILSNLPFHKGLKTDIKMIEKCIEEAPGHLYKGGKLRLVANAFLPYPKLLNRTFGHYEVLTQNARFKVYQATL.

This sequence belongs to the methyltransferase superfamily. RsmC family. In terms of assembly, monomer.

It is found in the cytoplasm. The catalysed reaction is guanosine(1207) in 16S rRNA + S-adenosyl-L-methionine = N(2)-methylguanosine(1207) in 16S rRNA + S-adenosyl-L-homocysteine + H(+). Specifically methylates the guanine in position 1207 of 16S rRNA in the 30S particle. This is Ribosomal RNA small subunit methyltransferase C from Hamiltonella defensa subsp. Acyrthosiphon pisum (strain 5AT).